We begin with the raw amino-acid sequence, 472 residues long: D-inositol 3-phosphate glycosyltransferase (472 aa).

1D-myo-inositol 3-phosphate is bound at residue His48. Residues 54 to 55 and Gly62 each bind UDP-N-acetyl-alpha-D-glucosamine; that span reads QP. 1D-myo-inositol 3-phosphate-binding positions include 59-64, Lys117, Tyr150, Thr174, and Arg194; that span reads DAGGMN. 3 residues coordinate UDP-N-acetyl-alpha-D-glucosamine: Arg282, Lys287, and Val348. The Mg(2+) site is built by Phe357, Arg358, and Ala360. Residues Glu370 and Glu378 each contribute to the UDP-N-acetyl-alpha-D-glucosamine site. Thr384 serves as a coordination point for Mg(2+).

Belongs to the glycosyltransferase group 1 family. MshA subfamily. As to quaternary structure, homodimer.

It catalyses the reaction 1D-myo-inositol 3-phosphate + UDP-N-acetyl-alpha-D-glucosamine = 1D-myo-inositol 2-acetamido-2-deoxy-alpha-D-glucopyranoside 3-phosphate + UDP + H(+). Catalyzes the transfer of a N-acetyl-glucosamine moiety to 1D-myo-inositol 3-phosphate to produce 1D-myo-inositol 2-acetamido-2-deoxy-glucopyranoside 3-phosphate in the mycothiol biosynthesis pathway. In Streptomyces griseus subsp. griseus (strain JCM 4626 / CBS 651.72 / NBRC 13350 / KCC S-0626 / ISP 5235), this protein is D-inositol 3-phosphate glycosyltransferase.